The primary structure comprises 992 residues: UPF0182 protein Mb3215c (992 aa).

7 consecutive transmembrane segments (helical) span residues 17-39, 59-81, 113-135, 169-191, 212-229, 255-277, and 284-306; these read RILI…LIDA, LATR…FGGL, LVGI…SYWA, LMLS…AHYI, LVSL…AYWL, VLPA…FSAI, and IPAI…WPLI. The tract at residues 906 to 938 is disordered; that stretch reads PTEAAVPPSPAANPPPPASGPQPPPVTAAPPVP. Residues 912 to 938 are compositionally biased toward pro residues; sequence PPSPAANPPPPASGPQPPPVTAAPPVP.

It belongs to the UPF0182 family.

It is found in the cell membrane. The sequence is that of UPF0182 protein Mb3215c from Mycobacterium bovis (strain ATCC BAA-935 / AF2122/97).